The primary structure comprises 429 residues: Adenylosuccinate synthetase (429 aa).

Residues 12-18 and 40-42 each bind GTP; these read GDEGKGK and GHT. Catalysis depends on Asp13, which acts as the Proton acceptor. Residues Asp13 and Gly40 each contribute to the Mg(2+) site. IMP-binding positions include 13 to 16, 38 to 41, Thr128, Arg142, Gln223, Thr238, and Arg302; these read DEGK and NAGH. The active-site Proton donor is His41. 298–304 contributes to the substrate binding site; sequence TVTKRPR. GTP contacts are provided by residues Arg304, 330-332, and 412-414; these read CLD and SVG.

Belongs to the adenylosuccinate synthetase family. Homodimer. It depends on Mg(2+) as a cofactor.

The protein resides in the cytoplasm. The enzyme catalyses IMP + L-aspartate + GTP = N(6)-(1,2-dicarboxyethyl)-AMP + GDP + phosphate + 2 H(+). It participates in purine metabolism; AMP biosynthesis via de novo pathway; AMP from IMP: step 1/2. Its function is as follows. Plays an important role in the de novo pathway of purine nucleotide biosynthesis. Catalyzes the first committed step in the biosynthesis of AMP from IMP. In Lactiplantibacillus plantarum (strain ATCC BAA-793 / NCIMB 8826 / WCFS1) (Lactobacillus plantarum), this protein is Adenylosuccinate synthetase.